We begin with the raw amino-acid sequence, 458 residues long: ATP synthase subunit beta (458 aa).

Gly148–Thr155 contributes to the ATP binding site.

Belongs to the ATPase alpha/beta chains family. As to quaternary structure, F-type ATPases have 2 components, CF(1) - the catalytic core - and CF(0) - the membrane proton channel. CF(1) has five subunits: alpha(3), beta(3), gamma(1), delta(1), epsilon(1). CF(0) has three main subunits: a(1), b(2) and c(9-12). The alpha and beta chains form an alternating ring which encloses part of the gamma chain. CF(1) is attached to CF(0) by a central stalk formed by the gamma and epsilon chains, while a peripheral stalk is formed by the delta and b chains.

It localises to the cell inner membrane. The enzyme catalyses ATP + H2O + 4 H(+)(in) = ADP + phosphate + 5 H(+)(out). In terms of biological role, produces ATP from ADP in the presence of a proton gradient across the membrane. The catalytic sites are hosted primarily by the beta subunits. In Pseudomonas fluorescens (strain SBW25), this protein is ATP synthase subunit beta.